The sequence spans 3013 residues: Genome polyprotein (3013 aa).

Position 2 is an N-acetylserine; by host (serine 2). The interaction with STAT1 stretch occupies residues 2-23 (STLPKPQKRNQRNTNRRPQDVK). The interaction with EIF2AK2/PKR stretch occupies residues 2–58 (STLPKPQKRNQRNTNRRPQDVKFPGGGQIVGGVYLLPRRGPRLGVRATRKTSERSQP). The segment at 2–59 (STLPKPQKRNQRNTNRRPQDVKFPGGGQIVGGVYLLPRRGPRLGVRATRKTSERSQPR) is interaction with DDX3X. The tract at residues 2–75 (STLPKPQKRN…PKARRQTGRT (74 aa)) is disordered. Over 2-168 (STLPKPQKRN…EDGINYATGN (167 aa)) the chain is Cytoplasmic. 2 consecutive short sequence motifs (nuclear localization signal) follow at residues 5-13 (PKPQKRNQR) and 38-43 (PRRGPR). Residues 7–16 (PQKRNQRNTN) are compositionally biased toward basic residues. The segment covering 32–47 (GGVYLLPRRGPRLGVR) has biased composition (low complexity). Serine 53 is subject to Phosphoserine; by host. 2 short sequence motifs (nuclear localization signal) span residues 58–64 (PRGRRQP) and 66–71 (PKARRQ). Positions 58–72 (PRGRRQPIPKARRQT) are enriched in basic residues. Residues serine 99 and serine 116 each carry the phosphoserine; by host modification. The interval 112–152 (PRRRSRNLGKVIDTLTCGFADLMGYIPVVGAPLGGVAAALA) is important for endoplasmic reticulum and mitochondrial localization. The interval 122–173 (VIDTLTCGFADLMGYIPVVGAPLGGVAAALAHGVRAVEDGINYATGNLPGCS) is interaction with APOA2. Residues 164–167 (YATG) are important for lipid droplets localization. Residues 169-189 (LPGCSFSIFLLALLSCLTTPA) form a helical membrane-spanning segment. Residues 178–191 (LLALLSCLTTPASA) constitute a propeptide, ER anchor for the core protein, removed in mature form by host signal peptidase. Over 190-358 (SAVHYANKSG…TGGHWGILAG (169 aa)) the chain is Lumenal. N-linked (GlcNAc...) asparagine; by host glycans are attached at residues asparagine 196, asparagine 209, asparagine 234, and asparagine 250. Residues 265-296 (MVGAAAFCSAMYVGDLCGGIFLVGQLFSFNPR) form an important for fusion region. An N-linked (GlcNAc...) asparagine; by host glycan is attached at asparagine 305. Residues 359–379 (ILYYSMVANWAKVLCILFLFA) form a helical membrane-spanning segment. The Lumenal portion of the chain corresponds to 380-723 (GVDATTRTTG…WEYVVLAFLL (344 aa)). Positions 385-412 (TRTTGAQAARATLGFTGLFQTGAKQNIH) are HVR1. Asparagine 417, asparagine 423, and asparagine 430 each carry an N-linked (GlcNAc...) (high mannose) asparagine; by host glycan. 4 cysteine pairs are disulfide-bonded: cysteine 429/cysteine 553, cysteine 452/cysteine 459, cysteine 487/cysteine 495, and cysteine 504/cysteine 509. Asparagine 448 carries an N-linked (GlcNAc...) asparagine; by host glycan. Residues 475–479 (ANVSG) are HVR2. An N-linked (GlcNAc...) asparagine; by host glycan is attached at asparagine 476. The tract at residues 481-494 (SEDRPYCWHYAPRP) is CD81-binding 1. Asparagine 533 carries N-linked (GlcNAc...) asparagine; by host glycosylation. Residues 545 to 552 (PPAGAWYG) form a CD81-binding 2 region. N-linked (GlcNAc...) asparagine; by host glycosylation occurs at asparagine 557. Cystine bridges form between cysteine 565-cysteine 570, cysteine 579-cysteine 583, cysteine 595-cysteine 618, and cysteine 605-cysteine 642. Asparagine 621 and asparagine 643 each carry an N-linked (GlcNAc...) (high mannose) asparagine; by host glycan. Cysteines 650 and 675 form a disulfide. The tract at residues 658–669 (IEMSPLLFSTTE) is PKR/eIF2-alpha phosphorylation homology domain (PePHD). The chain crosses the membrane as a helical span at residues 724-744 (LADARICACLWMVLLISQVEA). At 745–755 (ALENLIVLNAA) the chain is on the lumenal side. The chain crosses the membrane as a helical span at residues 756-776 (SAASSQGWIYCLVFICCAWYI). Topologically, residues 777-780 (KGRV) are cytoplasmic. The chain crosses the membrane as a helical span at residues 781 to 801 (VPGATYAILHLWPLLLLVLAL). Residues 802 to 811 (PQRAYAQDRE) lie on the Lumenal side of the membrane. A helical transmembrane segment spans residues 812 to 832 (QGASIGVVVIAAITIFTLTPA). Over 833–879 (YKTMLVHFLWWNQYFIARSEALIQQWVPSLRVRGGRDAVILLTCLLH) the chain is Cytoplasmic. A helical transmembrane segment spans residues 880 to 900 (PSLGFDITKMLLALLGPLYLL). Over 901-926 (QVSLLRVPYYVRAHALLRVCILVRRV) the chain is Lumenal. The Peptidase C18 domain occupies 901–1024 (QVSLLRVPYY…DMKSMGWRLL (124 aa)). Residues 902 to 1204 (VSLLRVPYYV…PVENMETTMR (303 aa)) are protease NS2-3. Cysteine 920 carries the S-palmitoyl cysteine; by host lipid modification. The chain crosses the membrane as a helical span at residues 927–947 (AGGKYIQAALLKLGAWTGTYI). An interaction with host SCPS1 region spans residues 927-947 (AGGKYIQAALLKLGAWTGTYI). Residues 948–1655 (YDHLAPLSTW…CMAADLEVIT (708 aa)) are Cytoplasmic-facing. Catalysis depends on for protease NS2 activity; shared with dimeric partner residues histidine 950, glutamate 970, and cysteine 991. One can recognise a Peptidase S29 domain in the interval 1025-1206 (APITAYCQQT…ENMETTMRSP (182 aa)). Active-site charge relay system; for serine protease NS3 activity residues include histidine 1081 and aspartate 1105. Cysteine 1121 and cysteine 1123 together coordinate Zn(2+). Serine 1163 acts as the Charge relay system; for serine protease NS3 activity in catalysis. Zn(2+) is bound by residues cysteine 1169 and histidine 1173. The 153-residue stretch at 1215 to 1367 (PAVPQTYQVG…PNITETALPS (153 aa)) folds into the Helicase ATP-binding domain. 1228–1235 (APTGSGKS) is an ATP binding site. 2 residues coordinate Mg(2+): serine 1235 and glutamate 1315. A DECH box motif is present at residues 1314 to 1317 (DECH). In terms of domain architecture, Helicase C-terminal spans 1374–1536 (YGKAIPLECI…ELTPSETTVR (163 aa)). Residues 1484–1496 (QRRGRTGRGKPGV) form an RNA-binding region. Residues 1656–1676 (STWVLAGGIVAALAAYCLTVG) form a helical membrane-spanning segment. The NS3-binding stretch occupies residues 1677–1688 (SVVICGRIVTSG). Residues 1677–1803 (SVVICGRIVT…ALTSPLSTST (127 aa)) are Cytoplasmic-facing. Residues 1804–1824 (TLLLNILGGWVASQLAPPTAS) traverse the membrane as a helical segment. The Lumenal segment spans residues 1825 to 1826 (TA). Residues 1827–1847 (FVVSGLAGAAVGSIGLGKVII) traverse the membrane as a helical segment. A topological domain (cytoplasmic) is located at residue aspartate 1848. The helical transmembrane segment at 1849-1869 (ILAGYGAGVSGALVAFKIMSG) threads the bilayer. Residues 1870-1879 (EAPAVEDMVN) are Lumenal-facing. The chain crosses the membrane as a helical span at residues 1880–1900 (LLPALLSPGALVVGVVCAAVL). The Cytoplasmic segment spans residues 1901 to 1970 (RRHVGPSEGA…WISGDWSAPC (70 aa)). Residue cysteine 1970 is the site of S-palmitoyl cysteine; by host attachment. Residues 1971 to 2000 (SCSWLKDVWDWVCTVLSDFKTWLRAKLVPT) lie within the membrane without spanning it. The Cytoplasmic portion of the chain corresponds to 2001–2992 (LPGIPFISCQ…FHSVSRARPR (992 aa)). Positions 2009, 2027, 2029, and 2050 each coordinate Zn(2+). The segment at 2118–2206 (EFFTEVDGVR…ASSSASQLSA (89 aa)) is FKBP8-binding. Residues 2118-2331 (EFFTEVDGVR…PVPPPRKKRV (214 aa)) are transcriptional activation. Residues 2133 to 2137 (PPCRP) are interaction with non-structural protein 4A. The interval 2187–2440 (RLARGSPPSL…ALITPCAAEE (254 aa)) is interaction with host SKP2. Residues serine 2192, serine 2195, serine 2199, serine 2202, serine 2205, and serine 2208 each carry the phosphoserine; by host modification. Positions 2208–2247 (SLKATCTTAGKHPDAELIEANLLWRQEVGGNITRVESENK) are ISDR. An interaction with EIF2AK2/PKR region spans residues 2208–2273 (SLKATCTTAG…REISVGAECF (66 aa)). Residues 2247-2305 (KIIVLDSFDPLIAETDDREISVGAECFNPPRPKFPPALPVWARPDYNPPLLQPWKAPDY) form an NS4B-binding region. The tract at residues 2298 to 2376 (QPWKAPDYEP…STLSSDMTPP (79 aa)) is V3. Positions 2316 to 2411 (PPKGLPPVPP…PDLSSGSWST (96 aa)) are disordered. The SH3-binding signature appears at 2321-2324 (PPVP). A Nuclear localization signal motif is present at residues 2326-2334 (PRKKRVVQL). The span at 2347 to 2373 (AQTSFPPSTATLSEDSGRETSTLSSDM) shows a compositional bias: polar residues. Positions 2375–2385 (PPREEADRASD) are enriched in basic and acidic residues. A Phosphoserine; by host modification is found at serine 2464. The RdRp catalytic domain maps to 2636-2754 (PMGFSYDTRC…ISESMGVAED (119 aa)). The Mg(2+) site is built by aspartate 2642, aspartate 2740, and aspartate 2741. Residues 2993–3013 (NLLLCLLLLTVGVGIFLLPAR) traverse the membrane as a helical segment.

The protein belongs to the hepacivirus polyprotein family. In terms of assembly, homooligomer. Interacts with E1 (via C-terminus). Interacts with the non-structural protein 5A. Interacts (via N-terminus) with host STAT1 (via SH2 domain); this interaction results in decreased STAT1 phosphorylation and ubiquitin-mediated proteasome-dependent STAT1 degradation, leading to decreased IFN-stimulated gene transcription. Interacts with host STAT3; this interaction constitutively activates STAT3. Interacts with host LTBR receptor. Interacts with host TNFRSF1A receptor and possibly induces apoptosis. Interacts with host HNRPK. Interacts with host YWHAE. Interacts with host UBE3A/E6AP. Interacts with host DDX3X. Interacts with host APOA2. Interacts with host RXRA protein. Interacts with host SP110 isoform 3/Sp110b; this interaction sequesters the transcriptional corepressor SP110 away from the nucleus. Interacts with host CREB3 nuclear transcription protein; this interaction triggers cell transformation. Interacts with host ACY3. Interacts with host C1QR1. Interacts with host RBM24; this interaction, which enhances the interaction of the mature core protein with 5'-UTR, may inhibit viral translation and favor replication. Interacts with host EIF2AK2/PKR; this interaction induces the autophosphorylation of EIF2AK2. Part of the viral assembly initiation complex composed of NS2, E1, E2, NS3, NS4A, NS5A and the mature core protein. As to quaternary structure, forms a heterodimer with envelope glycoprotein E2. Interacts with mature core protein. Interacts with protease NS2. The heterodimer E1/E2 interacts with host CLDN1; this interaction plays a role in viral entry into host cell. Interacts with host SPSB2 (via C-terminus). Part of the viral assembly initiation complex composed of NS2, E1, E2, NS3, NS4A, NS5A and the mature core protein. Interacts with host NEURL3; this interaction prevents E1 binding to glycoprotein E2. Forms a heterodimer with envelope glycoprotein E1. Interacts with host CD81 and SCARB1 receptors; these interactions play a role in viral entry into host cell. Interacts with host EIF2AK2/PKR; this interaction inhibits EIF2AK2 and probably allows the virus to evade the innate immune response. Interacts with host CD209/DC-SIGN and CLEC4M/DC-SIGNR. Interact with host SPCS1; this interaction is essential for viral particle assembly. Interacts with protease NS2. The heterodimer E1/E2 interacts with host CLDN1; this interaction plays a role in viral entry into host cell. Part of the viral assembly initiation complex composed of NS2, E1, E2, NS3, NS4A, NS5A and the mature core protein. Interacts with host SLC3A2/4F2hc; the interaction may facilitate viral entry into host cell. Interacts with human PLSCR1. In terms of assembly, homohexamer. Homoheptamer. Interacts with protease NS2. As to quaternary structure, homodimer. Interacts with host SPCS1; this interaction is essential for viral particle assembly. Interacts with envelope glycoprotein E1. Interacts with envelope glycoprotein E2. Interacts with viroporin p7. Interacts with serine protease/helicase NS3. Part of the replication complex composed of NS2, NS3, NS4A, NS4B, NS5A and the RNA-directed RNA polymerase embedded in an ER-derived membranous web. Part of the viral assembly initiation complex composed of NS2, E1, E2, NS3, NS4A, NS5A and the mature core protein. Interacts with protease NS2. Interacts with non-structural protein 4A; this interaction stabilizes the folding of NS3 serine protease. NS3-NS4A interaction is essential for NS3 activation and allows membrane anchorage of the latter. NS3/NS4A complex also prevents phosphorylation of host IRF3, thus preventing the establishment of dsRNA induced antiviral state. Interacts with host MAVS; this interaction leads to the cleavage and inhibition of host MAVS. Interacts with host TICAM1; this interaction leads to the cleavage and inhibition of host TICAM1. Interacts with host TANK-binding kinase/TBK1; this interaction results in the inhibition of the association between TBK1 and IRF3, which leads to the inhibition of IRF3 activation. Interacts with host RBM24. Part of the replication complex composed of NS2, NS3, NS4A, NS4B, NS5A and the RNA-directed RNA polymerase embedded in an ER-derived membranous web. Part of the viral assembly initiation complex composed of NS2, E1, E2, NS3, NS4A, NS5A and the mature core protein. In terms of assembly, interacts with NS3 serine protease; this interaction stabilizes the folding of NS3 serine protease. NS3-NS4A interaction is essential for NS3 activation and allows membrane anchorage of the latter. Interacts with non-structural protein 5A (via N-terminus). Part of the replication complex composed of NS2, NS3, NS4A, NS4B, NS5A and the RNA-directed RNA polymerase embedded in an ER-derived membranous web. Part of the viral assembly initiation complex composed of NS2, E1, E2, NS3, NS4A, NS5A and the mature core protein. As to quaternary structure, homomultimer. Interacts with non-structural protein NS5A. Interacts with host PLA2G4C; this interaction likely initiates the recruitment of replication complexes to lipid droplets. Interacts with host STING; this interaction disrupts the interaction between STING and TBK1 thereby suppressing the interferon signaling. Part of the replication complex composed of NS2, NS3, NS4A, NS4B, NS5A and the RNA-directed RNA polymerase embedded in an ER-derived membranous web. Monomer. Homodimer; dimerization is required for RNA-binding. Interacts with the mature core protein. Interacts (via N-terminus) with non-structural protein 4A. Interacts with non-structural protein 4B. Interacts (via region D2) with RNA-directed RNA polymerase. Part of the viral assembly initiation complex composed of NS2, E1, E2, NS3, NS4A, NS5A and the mature core protein. Part of the replication complex composed of NS2, NS3, NS4A, NS4B, NS5A and the RNA-directed RNA polymerase embedded in an ER-derived membranous web. Interacts with host GRB2. Interacts with host BIN1. Interacts with host PIK3R1. Interacts with host SRCAP. Interacts with host FKBP8. Interacts (via C-terminus) with host VAPB (via MSP domain). Interacts with host EIF2AK2/PKR; this interaction leads to disruption of EIF2AK2 dimerization by NS5A and probably allows the virus to evade the innate immune response. Interacts (via N-terminus) with host PACSIN2 (via N-terminus); this interaction attenuates protein kinase C alpha-mediated phosphorylation of PACSIN2 by disrupting the interaction between PACSIN2 and PRKCA. Interacts (via N-terminus) with host SRC kinase (via SH2 domain). Interacts with most Src-family kinases. Interacts with host IFI27 and SKP2; promotes the ubiquitin-mediated proteasomal degradation of NS5A. Interacts with host GPS2. Interacts with host TNFRSF21; this interaction allows the modulation by the virus of JNK, p38 MAPK, STAT3, and Akt signaling pathways in a DR6-dependent manner. Interacts (via N-terminus) with host CIDEB (via N-terminus); this interaction seems to regulate the association of HCV particles with APOE. Interacts with host CHKA/Choline Kinase-alpha; CHKA bridges host PI4KA and NS5A and potentiates NS5A-stimulated PI4KA activity, which then facilitates the targeting of the ternary complex to the ER for viral replication. Interacts with host SPSB2 (via C-terminus); this interaction targets NS5A for ubiquitination and degradation. Interacts with host RAB18; this interaction may promote the association of NS5A and other replicase components with lipid droplets. Interacts (via region D2) with host PPIA/CYPA; the interaction stimulates RNA-binding ability of NS5A and is dependent on the peptidyl-prolyl cis-trans isomerase activity of PPIA/CYPA. Interacts with host TRIM14; this interaction induces the degradation of NS5A. In terms of assembly, homooligomer. Interacts with non-structural protein 5A. Interacts with host VAPB. Interacts with host PRK2/PKN2. Interacts with host HNRNPA1 and SEPT6; these interactions facilitate viral replication. Part of the replication complex composed of NS2, NS3, NS4A, NS4B, NS5A and the RNA-directed RNA polymerase. Zn(2+) serves as cofactor. Mg(2+) is required as a cofactor. In terms of processing, specific enzymatic cleavages in vivo yield mature proteins. The structural proteins, core, E1, E2 and p7 are produced by proteolytic processing by host signal peptidases. The core protein precursor is synthesized as a 23 kDa, which is retained in the ER membrane through the hydrophobic signal peptide. Cleavage by the signal peptidase releases the 21 kDa mature core protein. The cleavage of the core protein precursor occurs between aminoacids 176 and 188 but the exact cleavage site is not known. Some degraded forms of the core protein appear as well during the course of infection. The other proteins (p7, NS2, NS3, NS4A, NS4B, NS5A and NS5B) are cleaved by the viral proteases. Autoprocessing between NS2 and NS3 is mediated by the NS2 cysteine protease catalytic domain and regulated by the NS3 N-terminal domain. Post-translationally, phosphorylated by host PKC and PKA. Ubiquitinated; mediated by UBE3A and leading to core protein subsequent proteasomal degradation. In terms of processing, highly N-glycosylated. Post-translationally, palmitoylation is required for NS2/3 autoprocessing and E2 recruitment to membranes. Palmitoylated. This modification may play a role in its polymerization or in protein-protein interactions. In terms of processing, phosphorylated on serines in a basal form termed p56. p58 is a hyperphosphorylated form of p56. p56 and p58 coexist in the cell in roughly equivalent amounts. Hyperphosphorylation is dependent on the presence of NS4A. Host CSNK1A1/CKI-alpha or RPS6KB1 kinases may be responsible for NS5A phosphorylation. Post-translationally, tyrosine phosphorylation is essential for the interaction with host SRC. The N-terminus is phosphorylated by host PRK2/PKN2.

The protein resides in the host endoplasmic reticulum membrane. It is found in the host mitochondrion membrane. The protein localises to the virion. Its subcellular location is the host cytoplasm. It localises to the host nucleus. The protein resides in the host lipid droplet. It is found in the virion membrane. The protein localises to the host mitochondrion. Its subcellular location is the host cell membrane. It localises to the host perinuclear region. It catalyses the reaction Hydrolysis of four peptide bonds in the viral precursor polyprotein, commonly with Asp or Glu in the P6 position, Cys or Thr in P1 and Ser or Ala in P1'.. The catalysed reaction is a ribonucleoside 5'-triphosphate + H2O = a ribonucleoside 5'-diphosphate + phosphate + H(+). It carries out the reaction ATP + H2O = ADP + phosphate + H(+). The enzyme catalyses RNA(n) + a ribonucleoside 5'-triphosphate = RNA(n+1) + diphosphate. Its activity is regulated as follows. Inhibited by the antiviral drug hexamethylene amiloride. Inhibition by amantadine appears to be genotype-dependent. Also inhibited by long-alkyl-chain iminosugar derivatives. With respect to regulation, activity is up-regulated by PRK2/PKN2-mediated phosphorylation. In terms of biological role, packages viral RNA to form a viral nucleocapsid, and promotes virion budding. Participates in the viral particle production as a result of its interaction with the non-structural protein 5A. Binds RNA and may function as a RNA chaperone to induce the RNA structural rearrangements taking place during virus replication. Modulates viral translation initiation by interacting with viral IRES and 40S ribosomal subunit. Affects various cell signaling pathways, host immunity and lipid metabolism. Prevents the establishment of cellular antiviral state by blocking the interferon-alpha/beta (IFN-alpha/beta) and IFN-gamma signaling pathways and by blocking the formation of phosphorylated STAT1 and promoting ubiquitin-mediated proteasome-dependent degradation of STAT1. Activates STAT3 leading to cellular transformation. Regulates the activity of cellular genes, including c-myc and c-fos. May repress the promoter of p53, and sequester CREB3 and SP110 isoform 3/Sp110b in the cytoplasm. Represses cell cycle negative regulating factor CDKN1A, thereby interrupting an important check point of normal cell cycle regulation. Targets transcription factors involved in the regulation of inflammatory responses and in the immune response: suppresses TNF-induced NF-kappa-B activation, and activates AP-1. Binds to dendritic cells (DCs) via C1QR1, resulting in down-regulation of T-lymphocytes proliferation. Alters lipid metabolism by interacting with hepatocellular proteins involved in lipid accumulation and storage. Induces up-regulation of FAS promoter activity, and thereby contributes to the increased triglyceride accumulation in hepatocytes (steatosis). Functionally, forms a heterodimer with envelope glycoprotein E2, which mediates virus attachment to the host cell, virion internalization through clathrin-dependent endocytosis and fusion with host membrane. Fusion with the host cell is most likely mediated by both E1 and E2, through conformational rearrangements of the heterodimer required for fusion rather than a classical class II fusion mechanism. E1/E2 heterodimer binds host apolipoproteins such as APOB and ApoE thereby forming a lipo-viro-particle (LVP). APOE associated to the LVP allows the initial virus attachment to cell surface receptors such as the heparan sulfate proteoglycans (HSPGs), syndecan-1 (SDC1), syndecan-1 (SDC2), the low-density lipoprotein receptor (LDLR) and scavenger receptor class B type I (SCARB1). The cholesterol transfer activity of SCARB1 allows E2 exposure and binding of E2 to SCARB1 and the tetraspanin CD81. E1/E2 heterodimer binding on CD81 activates the epithelial growth factor receptor (EGFR) signaling pathway. Diffusion of the complex E1-E2-EGFR-SCARB1-CD81 to the cell lateral membrane allows further interaction with Claudin 1 (CLDN1) and occludin (OCLN) to finally trigger HCV entry. Its function is as follows. Forms a heterodimer with envelope glycoprotein E1, which mediates virus attachment to the host cell, virion internalization through clathrin-dependent endocytosis and fusion with host membrane. Fusion with the host cell is most likely mediated by both E1 and E2, through conformational rearrangements of the heterodimer required for fusion rather than a classical class II fusion mechanism. The interaction between envelope glycoprotein E2 and host apolipoprotein E/APOE allows the proper assembly, maturation and infectivity of the viral particles. This interaction is probably promoted via the up-regulation of cellular autophagy by the virus. E1/E2 heterodimer binds host apolipoproteins such as APOB and APOE thereby forming a lipo-viro-particle (LVP). APOE associated to the LVP allows the initial virus attachment to cell surface receptors such as the heparan sulfate proteoglycans (HSPGs), syndecan-1 (SDC1), syndecan-1 (SDC2), the low-density lipoprotein receptor (LDLR) and scavenger receptor class B type I (SCARB1). The cholesterol transfer activity of SCARB1 allows E2 exposure and binding of E2 to SCARB1 and the tetraspanin CD81. E1/E2 heterodimer binding on CD81 activates the epithelial growth factor receptor (EGFR) signaling pathway. Diffusion of the complex E1-E2-EGFR-SCARB1-CD81 to the cell lateral membrane allows further interaction with Claudin 1 (CLDN1) and occludin (OCLN) to finally trigger HCV entry. Inhibits host EIF2AK2/PKR activation, preventing the establishment of an antiviral state. Viral ligand for CD209/DC-SIGN and CLEC4M/DC-SIGNR, which are respectively found on dendritic cells (DCs), and on liver sinusoidal endothelial cells and macrophage-like cells of lymph node sinuses. These interactions allow the capture of circulating HCV particles by these cells and subsequent facilitated transmission to permissive cells such as hepatocytes and lymphocyte subpopulations. The interaction between E2 and host amino acid transporter complex formed by SLC3A2 and SLC7A5/LAT1 may facilitate viral entry into host cell. Ion channel protein that acts as a viroporin and plays an essential role in the assembly, envelopment and secretion of viral particles. Regulates the host cell secretory pathway, which induces the intracellular retention of viral glycoproteins and favors assembly of viral particles. Creates a pore in acidic organelles and releases Ca(2+) and H(+) in the cytoplasm of infected cells, leading to a productive viral infection. High levels of cytoplasmic Ca(2+) may trigger membrane trafficking and transport of viral ER-associated proteins to viroplasms, sites of viral genome replication. This ionic imbalance induces the assembly of the inflammasome complex, which triggers the maturation of pro-IL-1beta into IL-1beta through the action of caspase-1. Targets also host mitochondria and induces mitochondrial depolarization. In addition of its role as a viroporin, acts as a lipid raft adhesion factor. In terms of biological role, cysteine protease required for the proteolytic auto-cleavage between the non-structural proteins NS2 and NS3. The N-terminus of NS3 is required for the function of NS2 protease (active region NS2-3). Promotes the initiation of viral particle assembly by mediating the interaction between structural and non-structural proteins. Functionally, displays three enzymatic activities: serine protease with a chymotrypsin-like fold, NTPase and RNA helicase. NS3 serine protease, in association with NS4A, is responsible for the cleavages of NS3-NS4A, NS4A-NS4B, NS4B-NS5A and NS5A-NS5B. The NS3/NS4A complex prevents phosphorylation of host IRF3, thus preventing the establishment of dsRNA induced antiviral state. The NS3/NS4A complex induces host amino acid transporter component SLC3A2, thus contributing to HCV propagation. NS3 RNA helicase binds to RNA and unwinds both dsDNA and dsRNA in the 3' to 5' direction, and likely resolves RNA complicated stable secondary structures in the template strand. Binds a single ATP and catalyzes the unzipping of a single base pair of dsRNA. Inhibits host antiviral proteins TBK1 and IRF3 thereby preventing the establishment of an antiviral state. Cleaves host MAVS/CARDIF thereby preventing the establishment of an antiviral state. Cleaves host TICAM1/TRIF, thereby disrupting TLR3 signaling and preventing the establishment of an antiviral state. Its function is as follows. Peptide cofactor which forms a non-covalent complex with the N-terminal of NS3 serine protease. The NS3/NS4A complex prevents phosphorylation of host IRF3, thus preventing the establishment of dsRNA induced antiviral state. The NS3/NS4A complex induces host amino acid transporter component SLC3A2, thus contributing to HCV propagation. Induces a specific membrane alteration that serves as a scaffold for the virus replication complex. This membrane alteration gives rise to the so-called ER-derived membranous web that contains the replication complex. NS4B self-interaction contributes to its function in membranous web formation. Promotes host TRIF protein degradation in a CASP8-dependent manner thereby inhibiting host TLR3-mediated interferon signaling. Disrupts the interaction between STING and TBK1 contributing to the inhibition of interferon signaling. In terms of biological role, phosphorylated protein that is indispensable for viral replication and assembly. Both hypo- and hyperphosphorylated states are required for the viral life cycle. The hyperphosphorylated form of NS5A is an inhibitor of viral replication. Involved in RNA-binding and especially in binding to the viral genome. Zinc is essential for RNA-binding. Participates in the viral particle production as a result of its interaction with the mature viral core protein. Its interaction with host VAPB may target the viral replication complex to vesicles. Down-regulates viral IRES translation initiation. Mediates interferon resistance, presumably by interacting with and inhibiting host EIF2AK2/PKR. Prevents BIN1-induced apoptosis. Acts as a transcriptional activator of some host genes important for viral replication when localized in the nucleus. Via the interaction with host PACSIN2, modulates lipid droplet formation in order to promote virion assembly. Modulates TNFRSF21/DR6 signaling pathway for viral propagation. Functionally, RNA-dependent RNA polymerase that performs primer-template recognition and RNA synthesis during viral replication. Initiates RNA transcription/replication at a flavin adenine dinucleotide (FAD), resulting in a 5'- FAD cap on viral RNAs. In this way, recognition of viral 5' RNA by host pattern recognition receptors can be bypassed, thereby evading activation of antiviral pathways. The protein is Genome polyprotein of Hepatitis C virus genotype 6d (isolate VN235) (HCV).